The chain runs to 542 residues: TOM1-like protein 7 (542 aa).

The VHS domain occupies 29 to 158 (ATSELLRTPD…ELKRCGVKFP (130 aa)). Ser-161 is modified (phosphoserine). The 89-residue stretch at 201 to 289 (EIESLSLSSL…VLARHDAIAS (89 aa)) folds into the GAT domain. The segment at 303-340 (RETSSSLKTCGAAALESADSESSSSSSSSESETDEVED) is disordered. Residues 314 to 332 (AAALESADSESSSSSSSSE) are compositionally biased toward low complexity. At Ser-521 the chain carries Phosphoserine. The disordered stretch occupies residues 522-542 (FPARATGTSGAATAATVDRQP). Low complexity predominate over residues 524-542 (ARATGTSGAATAATVDRQP).

This sequence belongs to the TOM1 family. In terms of tissue distribution, preferentially expressed in flowers.

The protein resides in the membrane. Might contribute to the loading of the ESCRT machinery. This Arabidopsis thaliana (Mouse-ear cress) protein is TOM1-like protein 7.